The following is a 171-amino-acid chain: Large ribosomal subunit protein uL10 (171 aa).

This sequence belongs to the universal ribosomal protein uL10 family. In terms of assembly, part of the ribosomal stalk of the 50S ribosomal subunit. The N-terminus interacts with L11 and the large rRNA to form the base of the stalk. The C-terminus forms an elongated spine to which L12 dimers bind in a sequential fashion forming a multimeric L10(L12)X complex.

Forms part of the ribosomal stalk, playing a central role in the interaction of the ribosome with GTP-bound translation factors. The polypeptide is Large ribosomal subunit protein uL10 (Nitrosomonas eutropha (strain DSM 101675 / C91 / Nm57)).